The primary structure comprises 110 residues: Tumor suppressor candidate 2 (110 aa).

A lipid anchor (N-myristoyl glycine) is attached at Gly2. Ser50 is modified (phosphoserine).

This sequence belongs to the TUSC2 family. Myristoylation is required for tumor suppressor activity. As to expression, strong expression in heart, lung, skeletal muscle, kidney, and pancreas, followed by brain and liver, lowest levels in placenta.

Functionally, may function as a tumor suppressor, inhibiting colony formation, causing G1 arrest and ultimately inducing apoptosis in homozygous 3p21.3 120-kb region-deficient cells. The chain is Tumor suppressor candidate 2 (TUSC2) from Homo sapiens (Human).